A 139-amino-acid polypeptide reads, in one-letter code: ATP synthase epsilon chain 2 (139 aa).

This sequence belongs to the ATPase epsilon chain family. F-type ATPases have 2 components, CF(1) - the catalytic core - and CF(0) - the membrane proton channel. CF(1) has five subunits: alpha(3), beta(3), gamma(1), delta(1), epsilon(1). CF(0) has three main subunits: a, b and c.

The protein localises to the cell inner membrane. Functionally, produces ATP from ADP in the presence of a proton gradient across the membrane. This Paraburkholderia xenovorans (strain LB400) protein is ATP synthase epsilon chain 2.